We begin with the raw amino-acid sequence, 57 residues long: Large ribosomal subunit protein bL32 (57 aa).

The tract at residues 1-20 (MAVQQRRSSKHRRDKRRSHD) is disordered. Over residues 7 to 18 (RSSKHRRDKRRS) the composition is skewed to basic residues.

It belongs to the bacterial ribosomal protein bL32 family.

The protein is Large ribosomal subunit protein bL32 (rpmF) of Mycoplasma genitalium (strain ATCC 33530 / DSM 19775 / NCTC 10195 / G37) (Mycoplasmoides genitalium).